Consider the following 311-residue polypeptide: Nucleotide-binding protein Acel_1111 (311 aa).

30 to 37 (GLSGAGRS) provides a ligand contact to ATP. 81-84 (DVRS) serves as a coordination point for GTP.

This sequence belongs to the RapZ-like family.

In terms of biological role, displays ATPase and GTPase activities. The polypeptide is Nucleotide-binding protein Acel_1111 (Acidothermus cellulolyticus (strain ATCC 43068 / DSM 8971 / 11B)).